Consider the following 356-residue polypeptide: Tyrosine recombinase XerS (356 aa).

The region spanning 16-121 (IMPWYVLDYY…ALSSLYKYLT (106 aa)) is the Core-binding (CB) domain. In terms of domain architecture, Tyr recombinase spans 169 to 354 (AFLDYVDKEY…VNDEQKNALD (186 aa)). Active-site residues include R210, K234, H306, R309, and H332. Y341 (O-(3'-phospho-DNA)-tyrosine intermediate) is an active-site residue.

The protein belongs to the 'phage' integrase family. XerS subfamily.

The protein localises to the cytoplasm. Its activity is regulated as follows. FtsK is required for recombination. Site-specific tyrosine recombinase, which acts by catalyzing the cutting and rejoining of the recombining DNA molecules. Essential to convert dimers of the bacterial chromosome into monomers to permit their segregation at cell division. This Streptococcus pyogenes serotype M5 (strain Manfredo) protein is Tyrosine recombinase XerS.